The chain runs to 401 residues: Tyrosine--tRNA ligase (401 aa).

The short motif at 45–54 is the 'HIGH' region element; that stretch reads PTAPDLHLGH. A 'KMSKS' region motif is present at residues 230–234; the sequence is KMSKS. Residue K233 coordinates ATP. The S4 RNA-binding domain occupies 339–399; the sequence is IWLAKALVEC…GKRKFAKLKV (61 aa).

Belongs to the class-I aminoacyl-tRNA synthetase family. TyrS type 2 subfamily. In terms of assembly, homodimer.

It is found in the cytoplasm. It carries out the reaction tRNA(Tyr) + L-tyrosine + ATP = L-tyrosyl-tRNA(Tyr) + AMP + diphosphate + H(+). Catalyzes the attachment of tyrosine to tRNA(Tyr) in a two-step reaction: tyrosine is first activated by ATP to form Tyr-AMP and then transferred to the acceptor end of tRNA(Tyr). The polypeptide is Tyrosine--tRNA ligase (Campylobacter jejuni (strain RM1221)).